The chain runs to 240 residues: Ribonuclease PH (240 aa).

Phosphate-binding positions include arginine 87 and 125–127; that span reads GTR.

The protein belongs to the RNase PH family. As to quaternary structure, homohexameric ring arranged as a trimer of dimers.

It carries out the reaction tRNA(n+1) + phosphate = tRNA(n) + a ribonucleoside 5'-diphosphate. Phosphorolytic 3'-5' exoribonuclease that plays an important role in tRNA 3'-end maturation. Removes nucleotide residues following the 3'-CCA terminus of tRNAs; can also add nucleotides to the ends of RNA molecules by using nucleoside diphosphates as substrates, but this may not be physiologically important. Probably plays a role in initiation of 16S rRNA degradation (leading to ribosome degradation) during starvation. In Crocosphaera subtropica (strain ATCC 51142 / BH68) (Cyanothece sp. (strain ATCC 51142)), this protein is Ribonuclease PH.